Reading from the N-terminus, the 91-residue chain is UPF0250 protein PFLU_5418 (91 aa).

It belongs to the UPF0250 family.

This Pseudomonas fluorescens (strain SBW25) protein is UPF0250 protein PFLU_5418.